Reading from the N-terminus, the 213-residue chain is Octanoyltransferase (213 aa).

The region spanning 32 to 207 is the BPL/LPL catalytic domain; the sequence is NSTLDEIWLV…NILALLNNPD (176 aa). Substrate contacts are provided by residues 71 to 78, 138 to 140, and 151 to 153; these read RGGQVTYH, SLG, and GLA. C169 (acyl-thioester intermediate) is an active-site residue.

The protein belongs to the LipB family.

The protein resides in the cytoplasm. It catalyses the reaction octanoyl-[ACP] + L-lysyl-[protein] = N(6)-octanoyl-L-lysyl-[protein] + holo-[ACP] + H(+). Its pathway is protein modification; protein lipoylation via endogenous pathway; protein N(6)-(lipoyl)lysine from octanoyl-[acyl-carrier-protein]: step 1/2. Catalyzes the transfer of endogenously produced octanoic acid from octanoyl-acyl-carrier-protein onto the lipoyl domains of lipoate-dependent enzymes. Lipoyl-ACP can also act as a substrate although octanoyl-ACP is likely to be the physiological substrate. The protein is Octanoyltransferase of Shigella flexneri serotype 5b (strain 8401).